A 611-amino-acid polypeptide reads, in one-letter code: Polyphenol oxidase 4 (611 aa).

Positions 57, 82, 91, 251, 255, and 283 each coordinate Cu cation. Positions 80-82 (CTH) form a cross-link, 2'-(S-cysteinyl)-histidine (Cys-His). Substrate is bound at residue His255. The propeptide at 380-611 (IKKSEGGKNP…GGLGALGRIF (232 aa)) is removed in mature form.

The protein belongs to the tyrosinase family. Heterotetramer. Cu(2+) serves as cofactor. The C-ter is probably cleaved after Gly-379 since the mature active protein is smaller than the protein encoded by the gene.

The catalysed reaction is 2 L-dopa + O2 = 2 L-dopaquinone + 2 H2O. It carries out the reaction L-tyrosine + O2 = L-dopaquinone + H2O. In terms of biological role, copper-containing oxidase that catalyzes both the o-hydroxylation of monophenols and the subsequent oxidation of the resulting o-diphenols into reactive o-quinones, which evolve spontaneously to produce intermediates, which associate in dark brown pigments. Involved in the initial step of melanin synthesis. Melanins constitute a mechanism of defense and resistance to stress such as UV radiations, free radicals, gamma rays, dehydratation and extreme temperatures, and contribute to the fungal cell-wall resistance against hydrolytic enzymes in avoiding cellular lysis. Fungal pigments are also involved in the formation and stability of spores. This chain is Polyphenol oxidase 4 (PPO4), found in Agaricus bisporus (White button mushroom).